Consider the following 1174-residue polypeptide: Ankyrin repeat and LEM domain-containing protein 2 homolog (1174 aa).

Composition is skewed to low complexity over residues 37-56, 150-164, 174-198, and 205-219; these read NPAS…SAAS, SSPT…SSPT, LGSN…SSSN, and QQQM…PQQP. Disordered regions lie at residues 37 to 74 and 141 to 230; these read NPAS…YEDP and PIIS…PFRA. The ANK repeat unit spans residues 338–367; the sequence is RGETPLHFAAKNGHVAMVEVLVSYPECKSL. Disordered stretches follow at residues 519–543 and 961–981; these read AEAT…HNNN and GSSS…SPGI. Residues 521-532 show a composition bias toward polar residues; it reads ATSSPKPTKNVP. Residues 533–543 show a composition bias toward low complexity; sequence NGTNECEHNNN.

The protein belongs to the ANKLE2 family.

It is found in the endoplasmic reticulum. The protein localises to the nucleus envelope. The protein resides in the cytoplasm. Its function is as follows. Involved in brain development probably by regulating asymmetric division of neuroblasts. Regulates neuroblast asymmetric cell division by controlling asymmetric protein localization of Mira, Baz, Par-6 and aPKC, and spindle alignment. Also, regulates the localization of kinase Ball during mitosis, specifically maintaining Ball in the nucleus during interphase. Required for proper ER and nuclear envelope morphology in neuroblasts. This chain is Ankyrin repeat and LEM domain-containing protein 2 homolog, found in Drosophila melanogaster (Fruit fly).